Consider the following 335-residue polypeptide: GTPase Obg (335 aa).

The 158-residue stretch at 1–158 (MFLDQITIEL…RQVELELKLI (158 aa)) folds into the Obg domain. Residues 159–334 (ADIGLVGFPN…LNSLFTNKLA (176 aa)) enclose the OBG-type G domain. GTP is bound by residues 165 to 172 (GFPNAGKS), 190 to 194 (FTTLQ), 215 to 218 (DIPG), 285 to 288 (NKID), and 315 to 317 (SGL). Mg(2+) is bound by residues Ser-172 and Thr-192.

Belongs to the TRAFAC class OBG-HflX-like GTPase superfamily. OBG GTPase family. As to quaternary structure, monomer. The cofactor is Mg(2+).

It is found in the cytoplasm. In terms of biological role, an essential GTPase (4.1 pmol GTP/min). Cannot substitute endogenous obg in E.coli, has a partially dominant-negative phenotype upon overexpression in liquid culture leading to decreased growth rate in a concentration-dependent fashion, with 50% of cells being elongated. Binds GTP, GDP and possibly (p)ppGpp with moderate affinity, with high nucleotide exchange rates and a fairly low GTP hydrolysis rate. It may play a role in control of the cell cycle, stress response, ribosome biogenesis and in those bacteria that undergo differentiation, in morphogenesis control. In Chlamydia abortus (strain DSM 27085 / S26/3) (Chlamydophila abortus), this protein is GTPase Obg.